A 422-amino-acid polypeptide reads, in one-letter code: Probable biofilm formation methyltransferase WspC (422 aa).

The 264-residue stretch at 1-264 (MNDRFERLLK…LSFVFRRTSE (264 aa)) folds into the CheR-type methyltransferase domain. Residues T67, R71, E108, D132, 186–187 (NL), and 205–206 (RN) each bind S-adenosyl-L-methionine. The interval 289-316 (ASIRPSPPPPAKPRQRLSSLVPPASGQP) is disordered. The stretch at 354-387 (ATVFYWLGLLSDVAGQEQEAQDFYRKALYLEPQH) is one TPR repeat.

In terms of assembly, monomer.

Functionally, involved in biofilm formation. In Pseudomonas aeruginosa (strain ATCC 15692 / DSM 22644 / CIP 104116 / JCM 14847 / LMG 12228 / 1C / PRS 101 / PAO1), this protein is Probable biofilm formation methyltransferase WspC (wspC).